A 129-amino-acid chain; its full sequence is Phosphoribosyl-AMP cyclohydrolase (129 aa).

Aspartate 78 is a binding site for Mg(2+). Cysteine 79 is a binding site for Zn(2+). Residues aspartate 80 and aspartate 82 each coordinate Mg(2+). The Zn(2+) site is built by cysteine 96 and cysteine 103.

It belongs to the PRA-CH family. As to quaternary structure, homodimer. Requires Mg(2+) as cofactor. Zn(2+) serves as cofactor.

It is found in the cytoplasm. It carries out the reaction 1-(5-phospho-beta-D-ribosyl)-5'-AMP + H2O = 1-(5-phospho-beta-D-ribosyl)-5-[(5-phospho-beta-D-ribosylamino)methylideneamino]imidazole-4-carboxamide. The protein operates within amino-acid biosynthesis; L-histidine biosynthesis; L-histidine from 5-phospho-alpha-D-ribose 1-diphosphate: step 3/9. Functionally, catalyzes the hydrolysis of the adenine ring of phosphoribosyl-AMP. The sequence is that of Phosphoribosyl-AMP cyclohydrolase from Nitrosomonas eutropha (strain DSM 101675 / C91 / Nm57).